The following is a 551-amino-acid chain: Glucan 1,4-alpha-maltotetraohydrolase (551 aa).

The N-terminal stretch at 1 to 21 (MSHILRAAVLAAVLLPFPALA) is a signal peptide. Positions 22, 23, 34, 37, and 38 each coordinate Ca(2+). A substrate-binding site is contributed by 99 to 100 (YF). Asn137 contributes to the Ca(2+) binding site. Position 138 (His138) interacts with substrate. Cysteines 161 and 171 form a disulfide. Ca(2+) is bound by residues Asp172 and Asp175. 177 to 181 (FIGGE) is a binding site for substrate. Asp183 contacts Ca(2+). Residue Arg212 participates in substrate binding. The active-site Nucleophile is Asp214. Position 218 (Gly218) interacts with Ca(2+). Cys237 and Cys272 form a disulfide bridge. Glu240 (proton donor) is an active-site residue. Substrate-binding residues include His314 and Gln326. Residues 449-551 (GGEGGLVNVN…AAGASTSGSF (103 aa)) form the CBM20 domain.

The protein belongs to the glycosyl hydrolase 13 family. In terms of assembly, monomer. It depends on Ca(2+) as a cofactor.

The protein resides in the secreted. It catalyses the reaction Hydrolysis of (1-&gt;4)-alpha-D-glucosidic linkages in amylaceous polysaccharides, to remove successive maltotetraose residues from the non-reducing chain ends.. It functions in the pathway glycan degradation; starch degradation. The chain is Glucan 1,4-alpha-maltotetraohydrolase (mta) from Roseateles saccharophilus (Pseudomonas saccharophila).